The sequence spans 658 residues: Exoribonuclease 2 (658 aa).

The RNB domain occupies 189-530; the sequence is REDLTSLYFT…VNHRLIKQVL (342 aa). Residues 576-658 form the S1 motif domain; it reads AVEFDCEIAD…ETRSIVGNII (83 aa).

The protein belongs to the RNR ribonuclease family. RNase II subfamily.

Its subcellular location is the cytoplasm. It catalyses the reaction Exonucleolytic cleavage in the 3'- to 5'-direction to yield nucleoside 5'-phosphates.. Functionally, involved in mRNA degradation. Hydrolyzes single-stranded polyribonucleotides processively in the 3' to 5' direction. This is Exoribonuclease 2 from Actinobacillus pleuropneumoniae serotype 5b (strain L20).